Reading from the N-terminus, the 403-residue chain is F-box protein At2g40925 (403 aa).

The F-box domain maps to 21 to 71 (NRHDCEIPPDLMIEILIRLPTKSFMRFKCVSKQWSPLISGRYFCNRLFTCV).

This is F-box protein At2g40925 from Arabidopsis thaliana (Mouse-ear cress).